The chain runs to 293 residues: Serine/threonine-protein phosphatase 2A catalytic subunit beta isoform (293 aa).

Mn(2+) is bound by residues aspartate 41, histidine 43, aspartate 69, and asparagine 101. Histidine 102 (proton donor) is an active-site residue. Mn(2+) contacts are provided by histidine 151 and histidine 225. Residue tyrosine 291 is modified to Phosphotyrosine. Leucine 293 carries the leucine methyl ester modification.

Belongs to the PPP phosphatase family. PP-1 subfamily. As to quaternary structure, found in a complex with at least ARL2, PPP2CB, PPP2R1A, PPP2R2A, PPP2R5E and TBCD. Interacts with TBCD. PP2A consists of a common heterodimeric core enzyme (composed of a 36 kDa catalytic subunit (subunit C) and a 65 kDa constant regulatory subunit (PR65) (subunit A)) that associates with a variety of regulatory subunits. Proteins that associate with the core dimer include three families of regulatory subunits B (the R2/B/PR55/B55, R3/B''/PR72/PR130/PR59 and R5/B'/B56 families), the 48 kDa variable regulatory subunit, viral proteins, and cell signaling molecules. Binds PPME1. May indirectly interact with SGO1, most probably through regulatory B56 subunits. Interacts with CTTNBP2NL. Interacts with PTPA. Part of the core of STRIPAK complexes composed of PP2A catalytic and scaffolding subunits, the striatins (PP2A regulatory subunits), the striatin-associated proteins MOB4, STRIP1 and STRIP2, PDCD10 and members of the STE20 kinases, such as STK24 and STK26. Requires Mn(2+) as cofactor. Post-translationally, reversibly methyl esterified on Leu-293 by leucine carboxyl methyltransferase 1 (Lcmt1) and protein phosphatase methylesterase 1 (PPME1). Carboxyl methylation influences the affinity of the catalytic subunit for the different regulatory subunits, thereby modulating the PP2A holoenzyme's substrate specificity, enzyme activity and cellular localization. In terms of processing, phosphorylation of either threonine (by autophosphorylation-activated protein kinase) or tyrosine results in inactivation of the phosphatase. Auto-dephosphorylation has been suggested as a mechanism for reactivation. May be monoubiquitinated by NOSIP.

Its subcellular location is the cytoplasm. It localises to the nucleus. The protein localises to the chromosome. The protein resides in the centromere. It is found in the cytoskeleton. Its subcellular location is the spindle pole. It catalyses the reaction O-phospho-L-seryl-[protein] + H2O = L-seryl-[protein] + phosphate. The enzyme catalyses O-phospho-L-threonyl-[protein] + H2O = L-threonyl-[protein] + phosphate. Its function is as follows. Catalytic subunit of protein phosphatase 2A (PP2A), a serine/threonine phosphatase involved in the regulation of a wide variety of enzymes, signal transduction pathways, and cellular events. PP2A can modulate the activity of phosphorylase B kinase, casein kinase 2, mitogen-stimulated S6 kinase, and MAP-2 kinase. Part of the striatin-interacting phosphatase and kinase (STRIPAK) complexes. STRIPAK complexes have critical roles in protein (de)phosphorylation and are regulators of multiple signaling pathways including Hippo, MAPK, nuclear receptor and cytoskeleton remodeling. Different types of STRIPAK complexes are involved in a variety of biological processes such as cell growth, differentiation, apoptosis, metabolism and immune regulation. This Sus scrofa (Pig) protein is Serine/threonine-protein phosphatase 2A catalytic subunit beta isoform (PPP2CB).